The chain runs to 101 residues: CRISPR-associated endoribonuclease Cas2 (101 aa).

D8 lines the Mg(2+) pocket.

The protein belongs to the CRISPR-associated endoribonuclease Cas2 protein family. Homodimer, forms a heterotetramer with a Cas1 homodimer. Mg(2+) is required as a cofactor.

Functionally, CRISPR (clustered regularly interspaced short palindromic repeat), is an adaptive immune system that provides protection against mobile genetic elements (viruses, transposable elements and conjugative plasmids). CRISPR clusters contain sequences complementary to antecedent mobile elements and target invading nucleic acids. CRISPR clusters are transcribed and processed into CRISPR RNA (crRNA). Functions as a ssRNA-specific endoribonuclease. Involved in the integration of spacer DNA into the CRISPR cassette. The sequence is that of CRISPR-associated endoribonuclease Cas2 from Treponema denticola (strain ATCC 35405 / DSM 14222 / CIP 103919 / JCM 8153 / KCTC 15104).